We begin with the raw amino-acid sequence, 37 residues long: Large ribosomal subunit protein bL36 (37 aa).

Belongs to the bacterial ribosomal protein bL36 family.

The polypeptide is Large ribosomal subunit protein bL36 (Solibacter usitatus (strain Ellin6076)).